The chain runs to 379 residues: tRNA(Met) cytidine acetate ligase (379 aa).

ATP is bound by residues 8–21 (IAEF…HEYL), glycine 97, asparagine 153, and arginine 176.

This sequence belongs to the TmcAL family.

It localises to the cytoplasm. It catalyses the reaction cytidine(34) in elongator tRNA(Met) + acetate + ATP = N(4)-acetylcytidine(34) in elongator tRNA(Met) + AMP + diphosphate. In terms of biological role, catalyzes the formation of N(4)-acetylcytidine (ac(4)C) at the wobble position of elongator tRNA(Met), using acetate and ATP as substrates. First activates an acetate ion to form acetyladenylate (Ac-AMP) and then transfers the acetyl group to tRNA to form ac(4)C34. In Lactococcus lactis subsp. cremoris (strain MG1363), this protein is tRNA(Met) cytidine acetate ligase.